Consider the following 185-residue polypeptide: Prorelaxin H1 (185 aa).

An N-terminal signal peptide occupies residues 1 to 22 (MPRLFLFHLLEFCLLLNQFSRA). Disulfide bonds link Cys35–Cys172, Cys47–Cys185, and Cys171–Cys176. The propeptide at 56-158 (SLSQEDAPQT…KYLGLDTHSQ (103 aa)) is connecting peptide.

It belongs to the insulin family. Heterodimer of a B chain and an A chain linked by two disulfide bonds. Prostate. Not expressed in placenta, decidua or ovary.

It is found in the secreted. Its function is as follows. Relaxin is an ovarian hormone that acts with estrogen to produce dilatation of the birth canal in many mammals. May be involved in remodeling of connective tissues during pregnancy, promoting growth of pubic ligaments and ripening of the cervix. The polypeptide is Prorelaxin H1 (RLN1) (Homo sapiens (Human)).